The primary structure comprises 81 residues: MNQSEILEKVKAIVADQLSVDPEKVVPEASFAEDLNADSLDSVELIMALEEEFGVEIPDEEAEKLKTVQDVLDFINNKVAA.

Residues 4–79 (SEILEKVKAI…DVLDFINNKV (76 aa)) form the Carrier domain. S39 is modified (O-(pantetheine 4'-phosphoryl)serine).

It belongs to the acyl carrier protein (ACP) family. 4'-phosphopantetheine is transferred from CoA to a specific serine of apo-ACP by AcpS. This modification is essential for activity because fatty acids are bound in thioester linkage to the sulfhydryl of the prosthetic group.

The protein localises to the cytoplasm. It functions in the pathway lipid metabolism; fatty acid biosynthesis. In terms of biological role, carrier of the growing fatty acid chain in fatty acid biosynthesis. The polypeptide is Acyl carrier protein (Thermosynechococcus vestitus (strain NIES-2133 / IAM M-273 / BP-1)).